The primary structure comprises 2210 residues: Mediator of RNA polymerase II transcription subunit 13-like (2210 aa).

Positions 391-400 (SKRSQMSTPT) are enriched in polar residues. Disordered stretches follow at residues 391 to 414 (SKRSQMSTPTLEEEPASNPATWDF), 435 to 489 (AVGP…PFHH), and 519 to 582 (VSSS…NPAL). Over residues 445–458 (SQPGFSAGPSSSSS) the composition is skewed to low complexity. Over residues 468-480 (KTAERQEKGDKLQ) the composition is skewed to basic and acidic residues. A compositionally biased stretch (polar residues) spans 533–544 (SRNTSKQMNLNP). Over residues 551-560 (PISPLPPTLS) the composition is skewed to pro residues. 2 positions are modified to phosphoserine: Ser-553 and Ser-560. The LXXLL motif 1 signature appears at 669 to 673 (LQRLL). The span at 736–752 (GTEKDSLKKNKSEDGFG) shows a compositional bias: basic and acidic residues. Positions 736–770 (GTEKDSLKKNKSEDGFGTKDVTTPGHSTPVPDGKN) are disordered. 3 positions are modified to phosphoserine: Ser-817, Ser-826, and Ser-923. The segment at 1016 to 1096 (PQMNTPVTLN…STTRPLNSVE (81 aa)) is disordered. Low complexity predominate over residues 1025–1036 (NSAAPASNSGAG). Over residues 1077-1092 (TDQGSPASTPSTTRPL) the composition is skewed to polar residues. The short motif at 1225-1229 (LLLLL) is the LXXLL motif 2 element. Residues 1380-1401 (LPIPTLLVGYDKDFLTISPFSL) form a leucine-zipper region. Disordered regions lie at residues 1530–1656 (QTPP…VTER) and 2045–2080 (GNLHSSPNSSPVPSPGSPSGIGVGSHFQHSRSQGER). Low complexity predominate over residues 1531 to 1608 (TPPAAAQGQA…ISTTSSSGFS (78 aa)). The span at 1615–1629 (NPSTGGISADRTQGN) shows a compositional bias: polar residues. The segment covering 1637-1650 (DPGQSSSQPSQDGQ) has biased composition (low complexity). The residue at position 2083 (Ser-2083) is a Phosphoserine.

Belongs to the Mediator complex subunit 13 family. In terms of assembly, component of the Mediator complex, which is composed of MED1, MED4, MED6, MED7, MED8, MED9, MED10, MED11, MED12, MED13, MED13L, MED14, MED15, MED16, MED17, MED18, MED19, MED20, MED21, MED22, MED23, MED24, MED25, MED26, MED27, MED29, MED30, MED31, CCNC, CDK8 and CDC2L6/CDK11. The MED12, MED13, CCNC and CDK8 subunits form a distinct module termed the CDK8 module. Mediator containing the CDK8 module is less active than Mediator lacking this module in supporting transcriptional activation. Individual preparations of the Mediator complex lacking one or more distinct subunits have been variously termed ARC, CRSP, DRIP, PC2, SMCC and TRAP. In terms of tissue distribution, highly expressed in brain (cerebellum), heart (aorta), skeletal muscle, kidney, placenta and peripheral blood leukocytes. Highly expressed in fetal brain.

It is found in the nucleus. Its function is as follows. Component of the Mediator complex, a coactivator involved in the regulated transcription of nearly all RNA polymerase II-dependent genes. Mediator functions as a bridge to convey information from gene-specific regulatory proteins to the basal RNA polymerase II transcription machinery. Mediator is recruited to promoters by direct interactions with regulatory proteins and serves as a scaffold for the assembly of a functional preinitiation complex with RNA polymerase II and the general transcription factors. This subunit may specifically regulate transcription of targets of the Wnt signaling pathway and SHH signaling pathway. This chain is Mediator of RNA polymerase II transcription subunit 13-like (MED13L), found in Homo sapiens (Human).